Consider the following 441-residue polypeptide: Cobyrinate a,c-diamide synthase (441 aa).

The region spanning 243–434 (TVAVADDAAF…AHVHPESTAF (192 aa)) is the GATase cobBQ-type domain. C323 serves as the catalytic Nucleophile.

This sequence belongs to the CobB/CbiA family. Mg(2+) serves as cofactor.

The enzyme catalyses cob(II)yrinate + 2 L-glutamine + 2 ATP + 2 H2O = cob(II)yrinate a,c diamide + 2 L-glutamate + 2 ADP + 2 phosphate + 2 H(+). Its pathway is cofactor biosynthesis; adenosylcobalamin biosynthesis; cob(II)yrinate a,c-diamide from sirohydrochlorin (anaerobic route): step 10/10. Its function is as follows. Catalyzes the ATP-dependent amidation of the two carboxylate groups at positions a and c of cobyrinate, using either L-glutamine or ammonia as the nitrogen source. The protein is Cobyrinate a,c-diamide synthase of Halobacterium salinarum (strain ATCC 700922 / JCM 11081 / NRC-1) (Halobacterium halobium).